Here is a 305-residue protein sequence, read N- to C-terminus: Oxygen-dependent coproporphyrinogen-III oxidase (305 aa).

Ser-98 is a binding site for substrate. Residues His-102 and His-112 each coordinate a divalent metal cation. The Proton donor role is filled by His-112. Substrate is bound at residue 114 to 116 (NVR). A divalent metal cation-binding residues include His-151 and His-181. Residues 246 to 281 (YVEFNLVYDRGTLFGLQSGGRTESILMSMPPLARWE) form an important for dimerization region. A substrate-binding site is contributed by 264-266 (GGR).

Belongs to the aerobic coproporphyrinogen-III oxidase family. In terms of assembly, homodimer. A divalent metal cation is required as a cofactor.

The protein localises to the cytoplasm. The catalysed reaction is coproporphyrinogen III + O2 + 2 H(+) = protoporphyrinogen IX + 2 CO2 + 2 H2O. The protein operates within porphyrin-containing compound metabolism; protoporphyrin-IX biosynthesis; protoporphyrinogen-IX from coproporphyrinogen-III (O2 route): step 1/1. Its function is as follows. Involved in the heme biosynthesis. Catalyzes the aerobic oxidative decarboxylation of propionate groups of rings A and B of coproporphyrinogen-III to yield the vinyl groups in protoporphyrinogen-IX. This chain is Oxygen-dependent coproporphyrinogen-III oxidase, found in Vibrio vulnificus (strain CMCP6).